A 124-amino-acid chain; its full sequence is Small ribosomal subunit protein uS12 (124 aa).

A 3-methylthioaspartic acid modification is found at Asp-89.

Belongs to the universal ribosomal protein uS12 family. Part of the 30S ribosomal subunit. Contacts proteins S8 and S17. May interact with IF1 in the 30S initiation complex.

Functionally, with S4 and S5 plays an important role in translational accuracy. Interacts with and stabilizes bases of the 16S rRNA that are involved in tRNA selection in the A site and with the mRNA backbone. Located at the interface of the 30S and 50S subunits, it traverses the body of the 30S subunit contacting proteins on the other side and probably holding the rRNA structure together. The combined cluster of proteins S8, S12 and S17 appears to hold together the shoulder and platform of the 30S subunit. The chain is Small ribosomal subunit protein uS12 from Shewanella piezotolerans (strain WP3 / JCM 13877).